A 47-amino-acid chain; its full sequence is Large ribosomal subunit protein bL34 (47 aa).

Belongs to the bacterial ribosomal protein bL34 family.

This Corynebacterium glutamicum (strain R) protein is Large ribosomal subunit protein bL34.